The chain runs to 294 residues: 4-hydroxybenzoate octaprenyltransferase (294 aa).

8 consecutive transmembrane segments (helical) span residues 24 to 44 (IGILLLMWPTLWALWLAADGF), 47 to 67 (LHLIVIFALGTVLMRSAGCVI), 99 to 119 (LLAAGLSLVSFVLILPLDPLV), 139 to 159 (FLAIPQAYLGIAFGFGIPMGF), 164 to 184 (GEVPAIAWLLLLANIFWAVAY), 213 to 233 (VAAVMLCYAVAFGLIAAVGIA), 238 to 258 (PWFFGGIAIAAAIAIYHYTLI), and 274 to 294 (NWVGAVLFVALVIDYVAFPAA).

This sequence belongs to the UbiA prenyltransferase family. The cofactor is Mg(2+).

Its subcellular location is the cell inner membrane. The enzyme catalyses all-trans-octaprenyl diphosphate + 4-hydroxybenzoate = 4-hydroxy-3-(all-trans-octaprenyl)benzoate + diphosphate. It functions in the pathway cofactor biosynthesis; ubiquinone biosynthesis. Functionally, catalyzes the prenylation of para-hydroxybenzoate (PHB) with an all-trans polyprenyl group. Mediates the second step in the final reaction sequence of ubiquinone-8 (UQ-8) biosynthesis, which is the condensation of the polyisoprenoid side chain with PHB, generating the first membrane-bound Q intermediate 3-octaprenyl-4-hydroxybenzoate. The sequence is that of 4-hydroxybenzoate octaprenyltransferase from Aromatoleum aromaticum (strain DSM 19018 / LMG 30748 / EbN1) (Azoarcus sp. (strain EbN1)).